The sequence spans 314 residues: Serine/threonine-protein phosphatase CPPED1 (314 aa).

Residue Ser2 is modified to Phosphoserine. The segment at 47-250 (KAWSTGDCDN…KVVFSGHYHR (204 aa)) is catalytic. Residues Asp53, Asp90, Asn127, and His247 each coordinate a divalent metal cation. Residue Ser294 is modified to Phosphoserine.

The protein belongs to the metallophosphoesterase superfamily. CPPED1 family. A divalent metal cation serves as cofactor. In terms of tissue distribution, expressed in subcutaneous adipose tissue.

It localises to the cytoplasm. The catalysed reaction is O-phospho-L-seryl-[protein] + H2O = L-seryl-[protein] + phosphate. It catalyses the reaction O-phospho-L-threonyl-[protein] + H2O = L-threonyl-[protein] + phosphate. In terms of biological role, protein phosphatase that dephosphorylates AKT family kinase specifically at 'Ser-473', blocking cell cycle progression and promoting cell apoptosis. May play an inhibitory role in glucose uptake by adipocytes. This Homo sapiens (Human) protein is Serine/threonine-protein phosphatase CPPED1 (CPPED1).